The chain runs to 283 residues: Acetylglutamate kinase (283 aa).

Substrate-binding positions include 64-65 (GG), arginine 86, and asparagine 179.

It belongs to the acetylglutamate kinase family. ArgB subfamily.

It is found in the cytoplasm. It catalyses the reaction N-acetyl-L-glutamate + ATP = N-acetyl-L-glutamyl 5-phosphate + ADP. It participates in amino-acid biosynthesis; L-arginine biosynthesis; N(2)-acetyl-L-ornithine from L-glutamate: step 2/4. In terms of biological role, catalyzes the ATP-dependent phosphorylation of N-acetyl-L-glutamate. The polypeptide is Acetylglutamate kinase (Campylobacter hominis (strain ATCC BAA-381 / DSM 21671 / CCUG 45161 / LMG 19568 / NCTC 13146 / CH001A)).